Reading from the N-terminus, the 328-residue chain is Aspartate carbamoyltransferase catalytic subunit (328 aa).

The carbamoyl phosphate site is built by arginine 55 and threonine 56. Position 83 (lysine 83) interacts with L-aspartate. Residues arginine 105, histidine 135, and glutamine 138 each coordinate carbamoyl phosphate. L-aspartate contacts are provided by arginine 176 and arginine 230. Positions 271 and 272 each coordinate carbamoyl phosphate.

This sequence belongs to the aspartate/ornithine carbamoyltransferase superfamily. ATCase family. Heterododecamer (2C3:3R2) of six catalytic PyrB chains organized as two trimers (C3), and six regulatory PyrI chains organized as three dimers (R2).

The enzyme catalyses carbamoyl phosphate + L-aspartate = N-carbamoyl-L-aspartate + phosphate + H(+). Its pathway is pyrimidine metabolism; UMP biosynthesis via de novo pathway; (S)-dihydroorotate from bicarbonate: step 2/3. In terms of biological role, catalyzes the condensation of carbamoyl phosphate and aspartate to form carbamoyl aspartate and inorganic phosphate, the committed step in the de novo pyrimidine nucleotide biosynthesis pathway. The polypeptide is Aspartate carbamoyltransferase catalytic subunit (Streptomyces griseus subsp. griseus (strain JCM 4626 / CBS 651.72 / NBRC 13350 / KCC S-0626 / ISP 5235)).